A 186-amino-acid polypeptide reads, in one-letter code: Lipid A palmitoyltransferase PagP (186 aa).

An N-terminal signal peptide occupies residues 1-25 (MNVSKYVAIFSFVFIQLISVGKVFA). Active-site residues include His58, Asp101, and Ser102.

It belongs to the lipid A palmitoyltransferase family. As to quaternary structure, homodimer.

Its subcellular location is the cell outer membrane. It catalyses the reaction lipid A (E. coli) + a 1-hexadecanoyl-2-acyl-sn-glycero-3-phosphocholine = hepta-acyl lipid A (E. coli) + a 2-acyl-sn-glycero-3-phosphocholine. The enzyme catalyses lipid IIA + a 1-hexadecanoyl-2-acyl-sn-glycero-3-phosphocholine = lipid IIB + a 2-acyl-sn-glycero-3-phosphocholine. It carries out the reaction lipid IVA (E. coli) + a 1-hexadecanoyl-2-acyl-sn-glycero-3-phosphocholine = lipid IVB (E. coli) + a 2-acyl-sn-glycero-3-phosphocholine. Transfers a palmitate residue from the sn-1 position of a phospholipid to the N-linked hydroxymyristate on the proximal unit of lipid A or its precursors. The protein is Lipid A palmitoyltransferase PagP of Escherichia coli (strain ATCC 55124 / KO11FL).